A 96-amino-acid chain; its full sequence is Co-chaperonin GroES (96 aa).

It belongs to the GroES chaperonin family. In terms of assembly, heptamer of 7 subunits arranged in a ring. Interacts with the chaperonin GroEL.

It is found in the cytoplasm. Its function is as follows. Together with the chaperonin GroEL, plays an essential role in assisting protein folding. The GroEL-GroES system forms a nano-cage that allows encapsulation of the non-native substrate proteins and provides a physical environment optimized to promote and accelerate protein folding. GroES binds to the apical surface of the GroEL ring, thereby capping the opening of the GroEL channel. This chain is Co-chaperonin GroES, found in Legionella pneumophila (strain Paris).